Here is a 490-residue protein sequence, read N- to C-terminus: NADP-reducing hydrogenase subunit HndC (490 aa).

4Fe-4S ferredoxin-type domains lie at 433 to 462 (LTYT…GTKK) and 463 to 490 (QPHT…IIKQ).

This sequence belongs to the complex I 51 kDa subunit family. In terms of assembly, heterotetramer composed of HndA, HndB, HndC and HndD subunits. HndC is probably the reducing subunit.

It carries out the reaction H2 + NADP(+) = NADPH + H(+). Its activity is regulated as follows. Inhibited by oxygen. Functionally, catalyzes the reduction of NADP in the presence of molecular H2 to yield NADPH. This Solidesulfovibrio fructosivorans (Desulfovibrio fructosivorans) protein is NADP-reducing hydrogenase subunit HndC (hndC).